The following is a 235-amino-acid chain: Uracil-DNA glycosylase (235 aa).

Asp-71 serves as the catalytic Proton acceptor.

It belongs to the uracil-DNA glycosylase (UDG) superfamily. UNG family.

It is found in the cytoplasm. The enzyme catalyses Hydrolyzes single-stranded DNA or mismatched double-stranded DNA and polynucleotides, releasing free uracil.. In terms of biological role, excises uracil residues from the DNA which can arise as a result of misincorporation of dUMP residues by DNA polymerase or due to deamination of cytosine. This is Uracil-DNA glycosylase from Helicobacter hepaticus (strain ATCC 51449 / 3B1).